Consider the following 581-residue polypeptide: Arginine--tRNA ligase (581 aa).

The 'HIGH' region motif lies at 131–141; sequence ANPTGPMHVGH.

Belongs to the class-I aminoacyl-tRNA synthetase family. As to quaternary structure, monomer.

Its subcellular location is the cytoplasm. The catalysed reaction is tRNA(Arg) + L-arginine + ATP = L-arginyl-tRNA(Arg) + AMP + diphosphate. This is Arginine--tRNA ligase from Paracoccus denitrificans (strain Pd 1222).